A 586-amino-acid chain; its full sequence is MSRRLLPRAEKRRRRLEQRQQPDEQLRRAGAMVKMAAAGGGGGGGRYYGGGNEGGRAPKRLKTENAGDQHGGGGGGGSGAAGGGGGENYDDPHKTPASPVVHIRGLIDGVVEADLVEALQEFGPISYVVVMPKKRQALVEFEDVLGACNAVNYAADNQIYIAGHPAFVNYSTSQKISRPGDSDDSRSVNSVLLFTILNPIYSITTDVLYTICNPCGPVQRIVIFRKNGVQAMVEFDSVQSAQRAKASLNGADIYSGCCTLKIEYAKPTRLNVFKNDQDTWDYTNPNLSGQGDPGSNPNKRQRQPPLLGDHPAEYGGPHGGYHSHYHDEGYGPPPPHYEGRRMGPPVGGHRRGPSRYGPQYGHPPPPPPPPDYGPHADSPVLMVYGLDQSKMNCDRVFNVFCLYGNVEKVKFMKSKPGAAMVEMADGYAVDRAITHLNNNFMFGQKMNVCVSKQPAIMPGQSYGLEDGSCSYKDFSESRNNRFSTPEQAAKNRIQHPSNVLHFFNAPLEVTEENFFEICDELGVKRPTSVKVFSGKSERSSSGLLEWDSKSDALETLGFLNHYQMKNPNGPYPYTLKLCFSTAQHAS.

A compositionally biased stretch (basic residues) spans M1–L16. Positions M1–A97 are disordered. Residues E17–R27 are compositionally biased toward basic and acidic residues. Low complexity predominate over residues R28–A37. Gly residues predominate over residues A38–G54. Residues K59 and K62 each participate in a glycyl lysine isopeptide (Lys-Gly) (interchain with G-Cter in SUMO2) cross-link. Residues Q69–E87 show a composition bias toward gly residues. Residue S98 is modified to Phosphoserine. Residues P99–S173 form the RRM 1 domain. K133 participates in a covalent cross-link: Glycyl lysine isopeptide (Lys-Gly) (interchain with G-Cter in SUMO2). A Phosphoserine modification is found at S182. Residues S190–P267 form the RRM 2 domain. K266 bears the N6-acetyllysine mark. Over residues D281–N298 the composition is skewed to polar residues. The interval D281 to A376 is disordered. Residues S288 and S295 each carry the phosphoserine modification. K299 is covalently cross-linked (Glycyl lysine isopeptide (Lys-Gly) (interchain with G-Cter in SUMO2)). An asymmetric dimethylarginine mark is found at R351 and R355. Residues G361–Y372 show a composition bias toward pro residues. At S378 the chain carries Phosphoserine. RRM domains follow at residues P379–E476 and R492–S580. S541 bears the Phosphoserine; by CaMK4 mark. K565 is covalently cross-linked (Glycyl lysine isopeptide (Lys-Gly) (interchain with G-Cter in SUMO2)).

As to quaternary structure, identified in a IGF2BP1-dependent mRNP granule complex containing untranslated mRNAs. Interacts with HNRNPLL. Interacts with APEX1; the interaction is DNA-dependent. Component of a complex with SETD2. Interacts with ELAVL1. Part of a transcription inhibitory ribonucleoprotein complex composed at least of the circular RNA circZNF827, ZNF827 and HNRNPK. Interacts with CHD8 in an RNA-dependent manner. Phosphorylation at Ser-541 by CaMK4 enhances interaction with a CaMK4-responsive RNA element (CaRRE1), and prevents inclusion of the stress axis-regulated exon (STREX) of the KCNMA1 potassium channel transcripts upon membrane depolarization. As to expression, detected in hematopoietic cells, including lymphoid progenitor cells.

It localises to the nucleus. The protein resides in the nucleoplasm. Its subcellular location is the cytoplasm. Its function is as follows. Splicing factor binding to exonic or intronic sites and acting as either an activator or repressor of exon inclusion. Exhibits a binding preference for CA-rich elements. Component of the heterogeneous nuclear ribonucleoprotein (hnRNP) complexes and associated with most nascent transcripts. Associates, together with APEX1, to the negative calcium responsive element (nCaRE) B2 of the APEX2 promoter. As part of a ribonucleoprotein complex composed at least of ZNF827, HNRNPK and the circular RNA circZNF827 that nucleates the complex on chromatin, may negatively regulate the transcription of genes involved in neuronal differentiation. Regulates alternative splicing of a core group of genes involved in neuronal differentiation, likely by mediating H3K36me3-coupled transcription elongation and co-transcriptional RNA processing via interaction with CHD8. The polypeptide is Heterogeneous nuclear ribonucleoprotein L (Hnrnpl) (Mus musculus (Mouse)).